The sequence spans 184 residues: MTRIVVVDNHGQFTHLEHRALRDLGVDTELIDNDTPPEEIDADGIVLSGGPDMDRIGHSPAYLDLDIPVLGICLGMQLMAAELGGRVGAGDYGGYADVTVSIEDESDPLIGSLAPETRVWASHADEVKELPDGFERTATSEVCNIEAMSDTDRNRYGVQWHPEVAHTEAGEEVFENFRDICAGD.

Residues 3–184 enclose the Glutamine amidotransferase type-1 domain; that stretch reads RIVVVDNHGQ…ENFRDICAGD (182 aa). Cys-73 (nucleophile) is an active-site residue. Active-site residues include His-161 and Glu-163.

Heterodimer composed of a glutamine amidotransferase subunit (A) and a GMP-binding subunit (B).

The catalysed reaction is XMP + L-glutamine + ATP + H2O = GMP + L-glutamate + AMP + diphosphate + 2 H(+). Its pathway is purine metabolism; GMP biosynthesis; GMP from XMP (L-Gln route): step 1/1. In terms of biological role, catalyzes the synthesis of GMP from XMP. The protein is GMP synthase [glutamine-hydrolyzing] subunit A of Natronomonas pharaonis (strain ATCC 35678 / DSM 2160 / CIP 103997 / JCM 8858 / NBRC 14720 / NCIMB 2260 / Gabara) (Halobacterium pharaonis).